The chain runs to 901 residues: Sperm-associated antigen 1 (901 aa).

3 TPR repeats span residues 213–246, 247–279, and 280–313; these read ANREKGKGNEAFYSGDYEEAVMYYTRSLSALPTA, IAYNNRAQAEIKLQRWSSALEDCEKALELDPGN, and VKALLRRATTYKHQNKLQEAVDDLRKVLQVEPDN. The segment at 322–437 is disordered; the sequence is EVERDLKNSE…DNPSGLKRRG (116 aa). Phosphoserine occurs at positions 351 and 359. TPR repeat units lie at residues 430 to 464, 472 to 505, 507 to 539, 606 to 639, and 640 to 673; these read PSGLKRRGNELFRGGQFAEAAAQYSVAIAQLEPTG, SILYSNRAACYLKEGNCRDCIQDCNRALELHPFS, KPLLRRAMAYETLEQYRNAYVDYKTVLQIDCGI, FQALKEEGNQLVKDKNYKDAISKYNECLKINSKA, and CAIYTNRALCYLKLGQFEEAKLDCEQALQIDGEN. Positions 694–776 are disordered; the sequence is GVDPSQVLLS…AEPAEKLDVS (83 aa). S703 is subject to Phosphoserine. The span at 708-717 shows a compositional bias: basic and acidic residues; that stretch reads EAARHLDTKN. 2 positions are modified to phosphoserine: S739 and S740. Residue 756–763 coordinates GTP; the sequence is PARDGVED. S766 carries the post-translational modification Phosphoserine.

Detected in cerebellum, tongue, esophagus, forestomach, sperm and testis.

The protein resides in the cytoplasm. Its subcellular location is the dynein axonemal particle. May play a role in the cytoplasmic assembly of the ciliary dynein arms. May play a role in fertilization. Binds GTP and has GTPase activity. The sequence is that of Sperm-associated antigen 1 (Spag1) from Mus musculus (Mouse).